Reading from the N-terminus, the 172-residue chain is Outer-membrane lipoprotein carrier protein (172 aa).

The first 16 residues, 1-16 (MRIALLWVAFGALALA), serve as a signal peptide directing secretion.

It belongs to the LolA family. In terms of assembly, monomer.

Its subcellular location is the periplasm. Functionally, participates in the translocation of lipoproteins from the inner membrane to the outer membrane. Only forms a complex with a lipoprotein if the residue after the N-terminal Cys is not an aspartate (The Asp acts as a targeting signal to indicate that the lipoprotein should stay in the inner membrane). The sequence is that of Outer-membrane lipoprotein carrier protein from Wolinella succinogenes (strain ATCC 29543 / DSM 1740 / CCUG 13145 / JCM 31913 / LMG 7466 / NCTC 11488 / FDC 602W) (Vibrio succinogenes).